We begin with the raw amino-acid sequence, 396 residues long: Elongation factor Tu (396 aa).

The 196-residue stretch at 10 to 205 (KPHVNIGTIG…AVDESIPDPV (196 aa)) folds into the tr-type G domain. Positions 19–26 (GHVDHGKT) are G1. Residue 19–26 (GHVDHGKT) coordinates GTP. Residue T26 participates in Mg(2+) binding. Residues 62-66 (GITIN) are G2. Positions 83–86 (DAPG) are G3. GTP is bound by residues 83-87 (DAPGH) and 138-141 (NKAD). The interval 138–141 (NKAD) is G4. A G5 region spans residues 175-177 (SAL).

The protein belongs to the TRAFAC class translation factor GTPase superfamily. Classic translation factor GTPase family. EF-Tu/EF-1A subfamily. Monomer.

The protein resides in the cytoplasm. It catalyses the reaction GTP + H2O = GDP + phosphate + H(+). In terms of biological role, GTP hydrolase that promotes the GTP-dependent binding of aminoacyl-tRNA to the A-site of ribosomes during protein biosynthesis. This Mycobacterium avium (strain 104) protein is Elongation factor Tu.